We begin with the raw amino-acid sequence, 134 residues long: ATP synthase epsilon chain (134 aa).

It belongs to the ATPase epsilon chain family. As to quaternary structure, F-type ATPases have 2 components, CF(1) - the catalytic core - and CF(0) - the membrane proton channel. CF(1) has five subunits: alpha(3), beta(3), gamma(1), delta(1), epsilon(1). CF(0) has three main subunits: a, b and c.

It is found in the cell inner membrane. Produces ATP from ADP in the presence of a proton gradient across the membrane. The protein is ATP synthase epsilon chain of Solibacter usitatus (strain Ellin6076).